A 362-amino-acid chain; its full sequence is C-C chemokine receptor type 10 (362 aa).

Topologically, residues 1-52 (MGTEATEQVSWGHYSGDEEDAYSAEPLPELCYKADVQAFSRAFQPSVSLTVA) are extracellular. Residues 53 to 68 (ALGLAGNGLVLATHLA) form a helical membrane-spanning segment. The Cytoplasmic portion of the chain corresponds to 69–78 (ARRAARSPTS). The chain crosses the membrane as a helical span at residues 79 to 99 (AHLLQLALADLLLALTLPFAA). Residues 100 to 114 (AGALQGWSLGSATCR) are Extracellular-facing. Cys-113 and Cys-191 are joined by a disulfide. Residues 115 to 136 (TISGLYSASFHAGFLFLACISA) traverse the membrane as a helical segment. Over 137–159 (DRYVAIARALPAGPRPSTPGRAH) the chain is Cytoplasmic. The chain crosses the membrane as a helical span at residues 160–179 (LVSVIVWLLSLLLALPALLF). At 180-203 (SQDGQREGQRRCRLIFPEGLTQTV) the chain is on the extracellular side. A helical membrane pass occupies residues 204–225 (KGASAVAQVALGFALPLGVMVA). Topologically, residues 226–247 (CYALLGRTLLAARGPERRRALR) are cytoplasmic. A helical transmembrane segment spans residues 248-269 (VVVALVAAFVVLQLPYSLALLL). Residues 270–290 (DTADLLAARERSCPASKRKDV) are Extracellular-facing. A helical transmembrane segment spans residues 291-313 (ALLVTSGLALARCGLNPVLYAFL). At 314–362 (GLRFRQDLRRLLRGGSCPSGPQPRRGCPRRPRLSSCSAPTETHSLSWDN) the chain is on the cytoplasmic side. The span at 328–338 (GSCPSGPQPRR) shows a compositional bias: low complexity. The tract at residues 328 to 362 (GSCPSGPQPRRGCPRRPRLSSCSAPTETHSLSWDN) is disordered. Positions 351 to 362 (APTETHSLSWDN) are enriched in polar residues.

This sequence belongs to the G-protein coupled receptor 1 family. Expressed at high levels in adult testis, small intestine, fetal lung, fetal kidney. Weaker expression was observed in many other adult tissues including spleen, thymus, lymph node, Peyer patches, colon, heart, ovary, peripheral blood lymphocytes, thyroid and spinal cord. Also expressed by melanocytes, dermal fibroblasts, dermal microvascular endothelial cells. Also detected in T-cells and in skin-derived Langerhans cells.

The protein localises to the cell membrane. In terms of biological role, receptor for chemokines SCYA27 and SCYA28. Subsequently transduces a signal by increasing the intracellular calcium ions level and stimulates chemotaxis in a pre-B cell line. The chain is C-C chemokine receptor type 10 (CCR10) from Homo sapiens (Human).